Reading from the N-terminus, the 266-residue chain is Dihydropteroate synthase (266 aa).

Residues 12–260 (AAIMGILNVT…DVKANQDIVA (249 aa)) enclose the Pterin-binding domain. Position 19 (Asn-19) interacts with Mg(2+). (7,8-dihydropterin-6-yl)methyl diphosphate-binding positions include Thr-59, Asp-93, Asn-112, Asp-176, Lys-212, and 248-250 (RVH).

Belongs to the DHPS family. As to quaternary structure, homodimer or homotrimer. Requires Mg(2+) as cofactor.

The catalysed reaction is (7,8-dihydropterin-6-yl)methyl diphosphate + 4-aminobenzoate = 7,8-dihydropteroate + diphosphate. The protein operates within cofactor biosynthesis; tetrahydrofolate biosynthesis; 7,8-dihydrofolate from 2-amino-4-hydroxy-6-hydroxymethyl-7,8-dihydropteridine diphosphate and 4-aminobenzoate: step 1/2. Its function is as follows. Catalyzes the condensation of para-aminobenzoate (pABA) with 6-hydroxymethyl-7,8-dihydropterin diphosphate (DHPt-PP) to form 7,8-dihydropteroate (H2Pte), the immediate precursor of folate derivatives. This Streptococcus pyogenes serotype M6 (strain ATCC BAA-946 / MGAS10394) protein is Dihydropteroate synthase (folP).